We begin with the raw amino-acid sequence, 302 residues long: Dihydroorotate dehydrogenase B (NAD(+)), catalytic subunit (302 aa).

FMN is bound by residues S23 and 47-48; that span reads KG. Substrate-binding positions include K47 and 71–75; that span reads NSVGL. The FMN site is built by N101 and N128. Position 128 (N128) interacts with substrate. C131 (nucleophile) is an active-site residue. Positions 166 and 192 each coordinate FMN. 193-194 contacts substrate; sequence NT. Residues G218, 244 to 245, and 266 to 267 each bind FMN; these read GG and GT.

Belongs to the dihydroorotate dehydrogenase family. Type 1 subfamily. Heterotetramer of 2 PyrK and 2 PyrD type B subunits. The cofactor is FMN.

The protein localises to the cytoplasm. The catalysed reaction is (S)-dihydroorotate + NAD(+) = orotate + NADH + H(+). The protein operates within pyrimidine metabolism; UMP biosynthesis via de novo pathway; orotate from (S)-dihydroorotate (NAD(+) route): step 1/1. Its function is as follows. Catalyzes the conversion of dihydroorotate to orotate with NAD(+) as electron acceptor. In Alkaliphilus oremlandii (strain OhILAs) (Clostridium oremlandii (strain OhILAs)), this protein is Dihydroorotate dehydrogenase B (NAD(+)), catalytic subunit (pyrD).